Here is a 138-residue protein sequence, read N- to C-terminus: Large ribosomal subunit protein uL16 (138 aa).

Belongs to the universal ribosomal protein uL16 family. In terms of assembly, part of the 50S ribosomal subunit.

Its function is as follows. Binds 23S rRNA and is also seen to make contacts with the A and possibly P site tRNAs. This is Large ribosomal subunit protein uL16 from Hyphomonas neptunium (strain ATCC 15444).